The sequence spans 492 residues: Glycylpeptide N-tetradecanoyltransferase (492 aa).

Over residues 1–22 (MSDSKDRKGKAPEGQSSEKKDG) the composition is skewed to basic and acidic residues. The interval 1–45 (MSDSKDRKGKAPEGQSSEKKDGAVNITPQMAESLLENNPALRNET) is disordered. Tetradecanoyl-CoA contacts are provided by residues 82 to 85 (YKFW), 215 to 217 (LCI), and 223 to 227 (SKRLT). Leu492 functions as the Proton acceptor; via carboxylate in the catalytic mechanism.

This sequence belongs to the NMT family. As to quaternary structure, monomer.

The protein localises to the cytoplasm. It carries out the reaction N-terminal glycyl-[protein] + tetradecanoyl-CoA = N-tetradecanoylglycyl-[protein] + CoA + H(+). Its function is as follows. Adds a myristoyl group to the N-terminal glycine residue of certain cellular proteins. This Aspergillus fumigatus (strain ATCC MYA-4609 / CBS 101355 / FGSC A1100 / Af293) (Neosartorya fumigata) protein is Glycylpeptide N-tetradecanoyltransferase (nmt1).